The following is a 417-amino-acid chain: Ig-like V-type domain-containing protein FAM187A (417 aa).

The N-terminal stretch at 1–18 (MSLAHTTVLLWAWGSLQA) is a signal peptide. Over 19-377 (FEIVEKESVF…ASLSDPETRT (359 aa)) the chain is Extracellular. 2 N-linked (GlcNAc...) asparagine glycosylation sites follow: N248 and N318. Residues 268–362 (PWVPQVPIQF…IAGFRLGVIT (95 aa)) form the Ig-like V-type domain. C290 and C346 form a disulfide bridge. The chain crosses the membrane as a helical span at residues 378-398 (AIELTLMGYLLITIFFITIHL). The Cytoplasmic segment spans residues 399–417 (CRCCCQSRCCPNFSAQTLL).

Belongs to the FAM187 family.

The protein resides in the membrane. The chain is Ig-like V-type domain-containing protein FAM187A (Fam187a) from Mus musculus (Mouse).